A 462-amino-acid chain; its full sequence is Transcript termination protein A18 (462 aa).

Residues 99–255 (KCKEKRPLYT…NSIINFIKFS (157 aa)) form the Helicase ATP-binding domain. 112 to 119 (LACGFGKT) is a binding site for ATP. Residues 205–208 (DEAH) carry the DEAH box motif. Positions 308-459 (IVDKIIETFK…ATKLGFREVS (152 aa)) constitute a Helicase C-terminal domain.

Belongs to the helicase family. Poxviruses subfamily. In terms of assembly, interacts with G2. Might be part of a transcription complex composed at least of G2, A18, and H5.

The protein localises to the virion. Functionally, DNA helicase which seems to act as a postreplicative transcription termination factor. Involved in ATP-dependent release of nascent RNA. Forms a stable complex with single-stranded DNA, and to a lesser extent RNA. The protein is Transcript termination protein A18 of Vertebrata (FPV).